We begin with the raw amino-acid sequence, 159 residues long: Large ribosomal subunit protein uL15 (159 aa).

The span at 21–34 shows a compositional bias: basic residues; that stretch reads LRPAPGAHKSKIRV. The tract at residues 21–55 is disordered; the sequence is LRPAPGAHKSKIRVGRGEGSKGKTAGRGTKGSKAR.

This sequence belongs to the universal ribosomal protein uL15 family. As to quaternary structure, part of the 50S ribosomal subunit.

Functionally, binds to the 23S rRNA. In Frankia casuarinae (strain DSM 45818 / CECT 9043 / HFP020203 / CcI3), this protein is Large ribosomal subunit protein uL15.